A 385-amino-acid chain; its full sequence is MYSTELGINLFGSESNKKIQLNRIKILQKKINNFKIFLVIAGTNTSQIKGISAAGINAKSRRITALADAEFLLKGASKDHKYKLPRLNAGVTPALISHVCSKLINVYPVIVPLGIGVRPYFNHLVVEDRDLGPSNCLTTGKSMTKERVLNLYEKGLAIGKSSKQPILISESVPGGTTTAQAVMEAFGLRVSNLVGSSLFKAPRELRRKVVQKGLLNANLKTDFDSFDVVASVGDPFQAFSMGLLIGARLANQPVILSGGSQMLAVILLVLEFLGEKNKDDFIEDVFIATTGWLVKDNSLNDLLNLINEKYDANLLGLASPLNFQSSIYKELMDYELGHVKEGVGAGGISILAFLNGFKNKEIVSLCQQNLEIMKGLGQISLEKDC.

Belongs to the UPF0284 family.

This is UPF0284 protein PMT9312_0438 from Prochlorococcus marinus (strain MIT 9312).